The following is a 244-amino-acid chain: Glucosamine-6-phosphate deaminase (244 aa).

Asp67 (proton acceptor; for enolization step) is an active-site residue. Asn136 serves as the catalytic For ring-opening step. His138 acts as the Proton acceptor; for ring-opening step in catalysis. Glu143 (for ring-opening step) is an active-site residue.

The protein belongs to the glucosamine/galactosamine-6-phosphate isomerase family. NagB subfamily.

The catalysed reaction is alpha-D-glucosamine 6-phosphate + H2O = beta-D-fructose 6-phosphate + NH4(+). Its pathway is amino-sugar metabolism; N-acetylneuraminate degradation; D-fructose 6-phosphate from N-acetylneuraminate: step 5/5. Functionally, catalyzes the reversible isomerization-deamination of glucosamine 6-phosphate (GlcN6P) to form fructose 6-phosphate (Fru6P) and ammonium ion. This Clostridium botulinum (strain Loch Maree / Type A3) protein is Glucosamine-6-phosphate deaminase.